The primary structure comprises 842 residues: GPI ethanolamine phosphate transferase 2 (842 aa).

N186 is a glycosylation site (N-linked (GlcNAc...) asparagine). The chain crosses the membrane as a helical span at residues Y409–Y429. N-linked (GlcNAc...) asparagine glycosylation is present at N441. A run of 2 helical transmembrane segments spans residues T442–I462 and F468–S488. N506 carries N-linked (GlcNAc...) asparagine glycosylation. Residues G524–L544 traverse the membrane as a helical segment. N551 carries an N-linked (GlcNAc...) asparagine glycan. Residues V554–L574 form a helical membrane-spanning segment. The N-linked (GlcNAc...) asparagine glycan is linked to N578. 3 helical membrane passes run I615–V635, Y698–G718, and I740–F760. A glycan (N-linked (GlcNAc...) asparagine) is linked at N771. Transmembrane regions (helical) follow at residues Y783 to L803 and M821 to L841.

This sequence belongs to the PIGG/PIGN/PIGO family. PIGG subfamily.

It is found in the endoplasmic reticulum membrane. The protein operates within glycolipid biosynthesis; glycosylphosphatidylinositol-anchor biosynthesis. Its function is as follows. Ethanolamine phosphate transferase involved in glycosylphosphatidylinositol-anchor biosynthesis. Transfers ethanolamine phosphate to the GPI second mannose. This chain is GPI ethanolamine phosphate transferase 2 (LAS21), found in Candida glabrata (strain ATCC 2001 / BCRC 20586 / JCM 3761 / NBRC 0622 / NRRL Y-65 / CBS 138) (Yeast).